The chain runs to 692 residues: Elongation factor G (692 aa).

The 276-residue stretch at 8–283 folds into the tr-type G domain; sequence NRIRNIGIAA…AVIDYLPAPT (276 aa). GTP contacts are provided by residues 17 to 24, 81 to 85, and 135 to 138; these read AHIDAGKT, DTPGH, and NKMD.

It belongs to the TRAFAC class translation factor GTPase superfamily. Classic translation factor GTPase family. EF-G/EF-2 subfamily.

It is found in the cytoplasm. Catalyzes the GTP-dependent ribosomal translocation step during translation elongation. During this step, the ribosome changes from the pre-translocational (PRE) to the post-translocational (POST) state as the newly formed A-site-bound peptidyl-tRNA and P-site-bound deacylated tRNA move to the P and E sites, respectively. Catalyzes the coordinated movement of the two tRNA molecules, the mRNA and conformational changes in the ribosome. The chain is Elongation factor G from Helicobacter pylori (strain HPAG1).